Reading from the N-terminus, the 285-residue chain is Sulfotransferase 2A1 (285 aa).

3'-phosphoadenylyl sulfate-binding residues include lysine 44, serine 45, glycine 46, threonine 47, asparagine 48, and tryptophan 49. Histidine 99 (proton acceptor) is an active-site residue. Residues arginine 121, serine 129, tyrosine 184, serine 218, methionine 223, arginine 247, lysine 248, and glycine 249 each contribute to the 3'-phosphoadenylyl sulfate site.

This sequence belongs to the sulfotransferase 1 family. As to quaternary structure, homodimer. Highly expressed in liver.

The protein localises to the cytoplasm. It carries out the reaction an alcohol + 3'-phosphoadenylyl sulfate = an alkyl sulfate + adenosine 3',5'-bisphosphate + H(+). The catalysed reaction is taurolithocholate + 3'-phosphoadenylyl sulfate = taurolithocholate 3-sulfate + adenosine 3',5'-bisphosphate + H(+). It catalyses the reaction pregnenolone + 3'-phosphoadenylyl sulfate = pregnenolone sulfate + adenosine 3',5'-bisphosphate + H(+). The enzyme catalyses 3beta-hydroxyandrost-5-en-17-one + 3'-phosphoadenylyl sulfate = dehydroepiandrosterone 3-sulfate + adenosine 3',5'-bisphosphate + H(+). It carries out the reaction lithocholate + 3'-phosphoadenylyl sulfate = lithocholate sulfate + adenosine 3',5'-bisphosphate + H(+). The catalysed reaction is (24S)-hydroxycholesterol + 3'-phosphoadenylyl sulfate = (24S)-hydroxycholesterol 24-sulfate + adenosine 3',5'-bisphosphate + H(+). It catalyses the reaction (24S)-hydroxycholesterol + 3'-phosphoadenylyl sulfate = (24S)-hydroxycholesterol 3-sulfate + adenosine 3',5'-bisphosphate + H(+). The enzyme catalyses (24S)-hydroxycholesterol 24-sulfate + 3'-phosphoadenylyl sulfate = (24S)-hydroxycholesterol 3,24-disulfate + adenosine 3',5'-bisphosphate + H(+). It carries out the reaction androsterone + 3'-phosphoadenylyl sulfate = androsterone 3alpha-sulfate + adenosine 3',5'-bisphosphate + H(+). In terms of biological role, sulfotransferase that utilizes 3'-phospho-5'-adenylyl sulfate (PAPS) as sulfonate donor to catalyze the sulfonation of steroids and bile acids in the liver and adrenal glands. Mediates the sulfation of a wide range of steroids and sterols, including pregnenolone, androsterone, DHEA, bile acids, cholesterol and as well many xenobiotics that contain alcohol and phenol functional groups. Sulfonation increases the water solubility of most compounds, and therefore their renal excretion, but it can also result in bioactivation to form active metabolites. Plays an important role in maintening steroid and lipid homeostasis. Plays a key role in bile acid metabolism. In addition, catalyzes the metabolic activation of potent carcinogenic polycyclic arylmethanols. This is Sulfotransferase 2A1 (Sult2a1) from Mus musculus (Mouse).